Here is a 387-residue protein sequence, read N- to C-terminus: Large ribosomal subunit protein uL3 (387 aa).

Serine 24 bears the Phosphoserine mark. Lysine 39 participates in a covalent cross-link: Glycyl lysine isopeptide (Lys-Gly) (interchain with G-Cter in ubiquitin). Threonine 103 carries the phosphothreonine modification. A Glycyl lysine isopeptide (Lys-Gly) (interchain with G-Cter in ubiquitin) cross-link involves residue lysine 136. Serine 156 carries the post-translational modification Phosphoserine. Histidine 243 carries the post-translational modification Pros-methylhistidine. Serine 297 carries the post-translational modification Phosphoserine.

The protein belongs to the universal ribosomal protein uL3 family. As to quaternary structure, component of the large ribosomal subunit (LSU). Mature yeast ribosomes consist of a small (40S) and a large (60S) subunit. The 40S small subunit contains 1 molecule of ribosomal RNA (18S rRNA) and 33 different proteins (encoded by 57 genes). The large 60S subunit contains 3 rRNA molecules (25S, 5.8S and 5S rRNA) and 46 different proteins (encoded by 81 genes). uL3 forms together with ES39L one of the contact sites for the signal recognition particle that targets ribosomes to the endoplasmic reticulum membrane. Methylation at His-243 by HPM1 is required for proper 60S subunit assembly and promotes translational elongation fidelity.

The protein localises to the cytoplasm. In terms of biological role, component of the ribosome, a large ribonucleoprotein complex responsible for the synthesis of proteins in the cell. The small ribosomal subunit (SSU) binds messenger RNAs (mRNAs) and translates the encoded message by selecting cognate aminoacyl-transfer RNA (tRNA) molecules. The large subunit (LSU) contains the ribosomal catalytic site termed the peptidyl transferase center (PTC), which catalyzes the formation of peptide bonds, thereby polymerizing the amino acids delivered by tRNAs into a polypeptide chain. The nascent polypeptides leave the ribosome through a tunnel in the LSU and interact with protein factors that function in enzymatic processing, targeting, and the membrane insertion of nascent chains at the exit of the ribosomal tunnel. uL3 plays a role in coordinating processes of accommodating the aminoacyl-tRNA in the PTC. The polypeptide is Large ribosomal subunit protein uL3 (Saccharomyces cerevisiae (strain ATCC 204508 / S288c) (Baker's yeast)).